A 604-amino-acid polypeptide reads, in one-letter code: Microtubule-associated protein 70-4 (604 aa).

A disordered region spans residues 1–33; that stretch reads MEERGFMSPSLAISASYREGGSKGMSRRRSMRP. The stretch at 49-351 forms a coiled coil; that stretch reads DPVRIELNRL…ADRAAKSEAQ (303 aa). Positions 233–470 are required for targeting to microtubules; sequence IIDKMHRQKV…PLNHKSSEGT (238 aa). Disordered regions lie at residues 367–422 and 434–495; these read LKGP…RSLT and GTSR…NDSV. Over residues 371 to 385 the composition is skewed to low complexity; the sequence is TSSSSRGTSVGRSSS. 2 stretches are compositionally biased toward polar residues: residues 401–422 and 468–478; these read PKIT…RSLT and EGTSRGESPSS. Residues 521–569 adopt a coiled-coil conformation; it reads LRDKDEAIEMLAKKVETLTKAMDVEAKKMRREVAVMGKEVAAMRVVDKG.

The protein belongs to the MAP70 family.

The protein resides in the cytoplasm. The protein localises to the cytoskeleton. In terms of biological role, plant-specific protein that interact with microtubules. This Arabidopsis thaliana (Mouse-ear cress) protein is Microtubule-associated protein 70-4 (MAP70.4).